A 276-amino-acid chain; its full sequence is ATP synthase subunit a (276 aa).

6 consecutive transmembrane segments (helical) span residues 47-67 (WHIDSLLFSVGLGVLFLWLFY), 107-127 (IAPLGLTIFVWVFLMNLMDLI), 152-172 (DLNVTLGLALSVFVLIVFYSI), 188-208 (PFNHWALIPINFVLETVTLIA), 226-246 (LIFILIALMPWWAQFALSVPW), and 247-267 (AIFHILVIVLQAFIFMMLTIV).

The protein belongs to the ATPase A chain family. As to quaternary structure, F-type ATPases have 2 components, CF(1) - the catalytic core - and CF(0) - the membrane proton channel. CF(1) has five subunits: alpha(3), beta(3), gamma(1), delta(1), epsilon(1). CF(0) has three main subunits: a(1), b(2) and c(9-12). The alpha and beta chains form an alternating ring which encloses part of the gamma chain. CF(1) is attached to CF(0) by a central stalk formed by the gamma and epsilon chains, while a peripheral stalk is formed by the delta and b chains.

The protein resides in the cell inner membrane. Its function is as follows. Key component of the proton channel; it plays a direct role in the translocation of protons across the membrane. This is ATP synthase subunit a from Shewanella halifaxensis (strain HAW-EB4).